A 123-amino-acid polypeptide reads, in one-letter code: Large ribosomal subunit protein bL12 (123 aa).

The protein belongs to the bacterial ribosomal protein bL12 family. As to quaternary structure, homodimer. Part of the ribosomal stalk of the 50S ribosomal subunit. Forms a multimeric L10(L12)X complex, where L10 forms an elongated spine to which 2 to 4 L12 dimers bind in a sequential fashion. Binds GTP-bound translation factors.

In terms of biological role, forms part of the ribosomal stalk which helps the ribosome interact with GTP-bound translation factors. Is thus essential for accurate translation. The chain is Large ribosomal subunit protein bL12 from Mycoplasmopsis agalactiae (strain NCTC 10123 / CIP 59.7 / PG2) (Mycoplasma agalactiae).